The primary structure comprises 571 residues: Phosphatidylinositol-3,5-bisphosphate 3-phosphatase MTMR2 (571 aa).

The region spanning 1–67 (MEEPPLLPGE…GVINRVEKIG (67 aa)) is the GRAM domain. The 376-residue stretch at 133–508 (GWKVYDPIWE…RHLELWVGYY (376 aa)) folds into the Myotubularin phosphatase domain. The a 1,2-diacyl-sn-glycero-3-phospho-(1D-myo-inositol-3,5-bisphosphate) site is built by Asn-258, Asn-283, and Ile-284. A 1,2-diacyl-sn-glycero-3-phospho-(1D-myo-inositol-3-phosphate)-binding residues include Asn-258, Asn-283, and Ile-284. Cys-345 serves as the catalytic Phosphocysteine intermediate. A 1,2-diacyl-sn-glycero-3-phospho-(1D-myo-inositol-3,5-bisphosphate) contacts are provided by Ser-346, Asp-347, Gly-348, Trp-349, Asp-350, Arg-351, Arg-387, and Arg-391. The a 1,2-diacyl-sn-glycero-3-phospho-(1D-myo-inositol-3-phosphate) site is built by Ser-346, Asp-347, Gly-348, Trp-349, Asp-350, and Arg-351. Arg-391 contributes to the a 1,2-diacyl-sn-glycero-3-phospho-(1D-myo-inositol-3-phosphate) binding site. Residues 521 to 553 (VHNRYKELLAKRAELQKKVEELQREITNRSTSS) are a coiled coil. Positions 544–571 (REITNRSTSSSERAGSPAQCVTPVQTVV) are disordered.

Belongs to the protein-tyrosine phosphatase family. Non-receptor class myotubularin subfamily. As to quaternary structure, homooligomer and heterooligomer.

The protein localises to the cytoplasm. The protein resides in the early endosome membrane. The enzyme catalyses a 1,2-diacyl-sn-glycero-3-phospho-(1D-myo-inositol-3,5-bisphosphate) + H2O = a 1,2-diacyl-sn-glycero-3-phospho-(1D-myo-inositol-5-phosphate) + phosphate. The catalysed reaction is a 1,2-diacyl-sn-glycero-3-phospho-(1D-myo-inositol-3-phosphate) + H2O = a 1,2-diacyl-sn-glycero-3-phospho-(1D-myo-inositol) + phosphate. It catalyses the reaction 1,2-dioctanoyl-sn-glycero-3-phospho-(1-D-myo-inositol-3-phosphate) + H2O = 1,2-dioctanoyl-sn-glycero-3-phospho-(1D-myo-inositol) + phosphate. It carries out the reaction 1,2-dioctanoyl-sn-glycero-3-phospho-(1D-myo-inositol-3,5-bisphosphate) + H2O = 1,2-dioctanoyl-sn-glycero-3-phospho-(1D-myo-inositol-5-phosphate) + phosphate. Functionally, lipid phosphatase that specifically dephosphorylates the D-3 position of phosphatidylinositol 3-phosphate and phosphatidylinositol 3,5-bisphosphate, generating phosphatidylinositol and phosphatidylinositol 5-phosphate. Regulates the level of these phosphoinositides critical for various biological processes including autophagy initiation and autophagosome maturation. This Gallus gallus (Chicken) protein is Phosphatidylinositol-3,5-bisphosphate 3-phosphatase MTMR2.